Consider the following 273-residue polypeptide: MTPIQALIEDAFERRADITPATVTPETKAAIDAVIADIDAGRLRVAEKIAGEWVTHQWLKKAVLLSFRIRDNAVLDDGVSRYFDKVDTKFADWDAARFQAAGFRAVPGAVVRKGSYIAKNTVLMPSFVNIGAFVDEGTMVDTWATVGSCAQIGKNVHLSGGVGIGGVLEPLQANPTIIEDNCFIGARSEIVEGVIVEEGSVISMGVYIGQSTRIFDRETGEVSYGRVPAGSVVVSGNLPSKDGSYSLYCAVIVKKVDAKTRGKVGINELLRGI.

Substrate is bound by residues R104 and D141.

Belongs to the transferase hexapeptide repeat family. As to quaternary structure, homotrimer.

It localises to the cytoplasm. It catalyses the reaction (S)-2,3,4,5-tetrahydrodipicolinate + succinyl-CoA + H2O = (S)-2-succinylamino-6-oxoheptanedioate + CoA. It functions in the pathway amino-acid biosynthesis; L-lysine biosynthesis via DAP pathway; LL-2,6-diaminopimelate from (S)-tetrahydrodipicolinate (succinylase route): step 1/3. The polypeptide is 2,3,4,5-tetrahydropyridine-2,6-dicarboxylate N-succinyltransferase (Laribacter hongkongensis (strain HLHK9)).